A 415-amino-acid chain; its full sequence is Serine/threonine transporter SstT (415 aa).

8 consecutive transmembrane segments (helical) span residues 23–43 (ILIGLVLGVLLALVSKPAAIA), 47–67 (LGTLFVGALKAVAPVLVLMLV), 85–105 (ILFLYLLGTFSAALTAVLFSF), 144–164 (ALLNANYIGILVWAVGLGFAL), 181–201 (AVTFIVKVVIRFAPLGIFGLV), 220–240 (LLVLVGCMLLVALVINPLLVF), 293–313 (IPLGATINMAGAAITITVLTL), and 333–353 (VVASLCACGASGVAGGSLLLI).

Belongs to the dicarboxylate/amino acid:cation symporter (DAACS) (TC 2.A.23) family.

It localises to the cell inner membrane. It catalyses the reaction L-serine(in) + Na(+)(in) = L-serine(out) + Na(+)(out). The enzyme catalyses L-threonine(in) + Na(+)(in) = L-threonine(out) + Na(+)(out). In terms of biological role, involved in the import of serine and threonine into the cell, with the concomitant import of sodium (symport system). In Klebsiella pneumoniae (strain 342), this protein is Serine/threonine transporter SstT.